A 156-amino-acid polypeptide reads, in one-letter code: SsrA-binding protein (156 aa).

The span at 135–150 (KRDTIKDREWQRDRSR) shows a compositional bias: basic and acidic residues. A disordered region spans residues 135–156 (KRDTIKDREWQRDRSRIMKKNT).

Belongs to the SmpB family.

The protein localises to the cytoplasm. In terms of biological role, required for rescue of stalled ribosomes mediated by trans-translation. Binds to transfer-messenger RNA (tmRNA), required for stable association of tmRNA with ribosomes. tmRNA and SmpB together mimic tRNA shape, replacing the anticodon stem-loop with SmpB. tmRNA is encoded by the ssrA gene; the 2 termini fold to resemble tRNA(Ala) and it encodes a 'tag peptide', a short internal open reading frame. During trans-translation Ala-aminoacylated tmRNA acts like a tRNA, entering the A-site of stalled ribosomes, displacing the stalled mRNA. The ribosome then switches to translate the ORF on the tmRNA; the nascent peptide is terminated with the 'tag peptide' encoded by the tmRNA and targeted for degradation. The ribosome is freed to recommence translation, which seems to be the essential function of trans-translation. The chain is SsrA-binding protein from Legionella pneumophila (strain Paris).